A 284-amino-acid polypeptide reads, in one-letter code: Nucleoid occlusion protein (284 aa).

A DNA-binding region (H-T-H motif) is located at residues 143-162 (EALAQRVGKSQSAIANKMRL).

The protein belongs to the ParB family.

The protein resides in the cytoplasm. Its subcellular location is the nucleoid. Effects nucleoid occlusion by binding relatively nonspecifically to DNA and preventing the assembly of the division machinery in the vicinity of the nucleoid, especially under conditions that disturb the cell cycle. It helps to coordinate cell division and chromosome segregation by preventing the formation of the Z ring through the nucleoid, which would cause chromosome breakage. The protein is Nucleoid occlusion protein of Listeria innocua serovar 6a (strain ATCC BAA-680 / CLIP 11262).